The chain runs to 318 residues: CRISPR-associated endonuclease Cas1 1 (318 aa).

Mn(2+) is bound by residues Glu157, His222, and Glu237.

This sequence belongs to the CRISPR-associated endonuclease Cas1 family. Homodimer, forms a heterotetramer with a Cas2 homodimer. The cofactor is Mg(2+). Mn(2+) is required as a cofactor.

CRISPR (clustered regularly interspaced short palindromic repeat), is an adaptive immune system that provides protection against mobile genetic elements (viruses, transposable elements and conjugative plasmids). CRISPR clusters contain spacers, sequences complementary to antecedent mobile elements, and target invading nucleic acids. CRISPR clusters are transcribed and processed into CRISPR RNA (crRNA). Acts as a dsDNA endonuclease. Involved in the integration of spacer DNA into the CRISPR cassette. The polypeptide is CRISPR-associated endonuclease Cas1 1 (Francisella tularensis subsp. novicida (strain U112)).